A 460-amino-acid chain; its full sequence is Ribosome biogenesis protein YTM1 (460 aa).

The interval 8–89 (VKIRFFTREK…EASLNVEYTR (82 aa)) is ubiquitin-like (UBL) domain. Residues 99 to 460 (SFSNEDWVSS…INKGDNIFKN (362 aa)) are sufficient for interaction with ERB1 and association with 66S pre-ribosomes. 7 WD repeats span residues 101-140 (SNEDWVSSLDVGDGSKHIISGSYDGIVRTWDLSGNVQKQY), 142-180 (GHSGPIRAVKYISNTRLVSAGNDRTLRLWKTKNDDLKLT), 206-244 (GHKAPVVSIDVSDNSRILSASYDNSIGFWSTIYKEMTVV), 285-325 (SHTA…CIDT), 327-366 (TTSYSLLSIAQLSTLNLLACGSSARHITLHDPRVGASSKV), 373-413 (GHKN…PMYT), and 424-460 (GVNDKVFAVKWAEKVGIISAGQDKKIQINKGDNIFKN).

Belongs to the WD repeat WDR12/YTM1 family. Component of the NOP7 complex, composed of ERB1, NOP7 and YTM1. The complex is held together by ERB1, which interacts with NOP7 via its N-terminal domain and with YTM1 via a high-affinity interaction between the seven-bladed beta-propeller domains of the 2 proteins. The NOP7 complex associates with the 66S pre-ribosome. Interacts (via UBL domain) with MDN1 (via VWFA/MIDAS domain).

It is found in the nucleus. Its subcellular location is the nucleolus. The protein localises to the nucleoplasm. Its function is as follows. Component of the NOP7 complex, which is required for maturation of the 25S and 5.8S ribosomal RNAs and formation of the 60S ribosome. This is Ribosome biogenesis protein YTM1 from Saccharomyces cerevisiae (strain YJM789) (Baker's yeast).